The following is a 238-amino-acid chain: tRNA (guanine-N(7)-)-methyltransferase (238 aa).

4 residues coordinate S-adenosyl-L-methionine: E68, E93, D120, and D143. D143 is an active-site residue. Residues K147, D179, and T216–E219 contribute to the substrate site.

It belongs to the class I-like SAM-binding methyltransferase superfamily. TrmB family.

The enzyme catalyses guanosine(46) in tRNA + S-adenosyl-L-methionine = N(7)-methylguanosine(46) in tRNA + S-adenosyl-L-homocysteine. It functions in the pathway tRNA modification; N(7)-methylguanine-tRNA biosynthesis. Its function is as follows. Catalyzes the formation of N(7)-methylguanine at position 46 (m7G46) in tRNA. The chain is tRNA (guanine-N(7)-)-methyltransferase from Shewanella frigidimarina (strain NCIMB 400).